The primary structure comprises 232 residues: uncharacterized protein (232 aa).

The tract at residues 1–71 (MSNPTIEGDE…KENERIKNDD (71 aa)) is disordered. Acidic residues predominate over residues 25 to 38 (DDLDDLDDILDDLD). Over residues 44–71 (KNEEKKNIDEHKQTGNTSKENERIKNDD) the composition is skewed to basic and acidic residues.

This is an uncharacterized protein from Schizosaccharomyces pombe (strain 972 / ATCC 24843) (Fission yeast).